Here is a 191-residue protein sequence, read N- to C-terminus: Xanthine phosphoribosyltransferase (191 aa).

The xanthine site is built by Leu-20 and Asn-27. A 5-phospho-alpha-D-ribose 1-diphosphate-binding site is contributed by Ala-128–Ala-132. Lys-156 lines the xanthine pocket.

The protein belongs to the purine/pyrimidine phosphoribosyltransferase family. Xpt subfamily. As to quaternary structure, homodimer.

The protein resides in the cytoplasm. The catalysed reaction is XMP + diphosphate = xanthine + 5-phospho-alpha-D-ribose 1-diphosphate. The protein operates within purine metabolism; XMP biosynthesis via salvage pathway; XMP from xanthine: step 1/1. In terms of biological role, converts the preformed base xanthine, a product of nucleic acid breakdown, to xanthosine 5'-monophosphate (XMP), so it can be reused for RNA or DNA synthesis. This chain is Xanthine phosphoribosyltransferase, found in Limosilactobacillus reuteri (strain DSM 20016) (Lactobacillus reuteri).